The chain runs to 319 residues: Na(+)-translocating NADH-quinone reductase subunit C (319 aa).

The helical transmembrane segment at 14–34 threads the bilayer; the sequence is WYVILFIFALSLFSSVFLSTV. T283 bears the FMN phosphoryl threonine mark.

The protein belongs to the NqrC family. As to quaternary structure, composed of six subunits; NqrA, NqrB, NqrC, NqrD, NqrE and NqrF. Requires FMN as cofactor.

Its subcellular location is the cell inner membrane. The catalysed reaction is a ubiquinone + n Na(+)(in) + NADH + H(+) = a ubiquinol + n Na(+)(out) + NAD(+). In terms of biological role, NQR complex catalyzes the reduction of ubiquinone-1 to ubiquinol by two successive reactions, coupled with the transport of Na(+) ions from the cytoplasm to the periplasm. NqrA to NqrE are probably involved in the second step, the conversion of ubisemiquinone to ubiquinol. This Chlamydia caviae (strain ATCC VR-813 / DSM 19441 / 03DC25 / GPIC) (Chlamydophila caviae) protein is Na(+)-translocating NADH-quinone reductase subunit C.